Reading from the N-terminus, the 105-residue chain is U2-lycotoxin-Ls1c (105 aa).

Residues 1 to 17 form the signal peptide; the sequence is MIKYVLISALLVVAVYS. Positions 18–41 are excised as a propeptide; sequence FTIEDSEDALLEEAEDELDTEEER. Intrachain disulfides connect Cys51–Cys67, Cys58–Cys97, Cys60–Cys83, and Cys69–Cys81.

It belongs to the neurotoxin 04 (omega-agtx) family. 01 (type I omega-agtx) subfamily. As to expression, expressed by the venom gland.

It localises to the secreted. Insecticidal to house crickets. It induces an excitatory slow-onset impact that leads to irreversible spastic paralysis. It also modifies human voltage-gated potassium channel Kv1.5/KCNA5. Most likely, it binds to the voltage-sensing domain of the channel, suggesting it does not block the pore but prevents its opening at physiological membrane potentials. The recombinant peptide binds to the channel in an irreversible manner and slows down the hKv1.5 current activation kinetics. It is not toxic to mice, when intracranially injected (at 0.5 ug/g mouse). The protein is U2-lycotoxin-Ls1c of Lycosa singoriensis (Wolf spider).